The sequence spans 221 residues: Probable septum site-determining protein MinC (221 aa).

Belongs to the MinC family. Interacts with MinD and FtsZ.

Its function is as follows. Cell division inhibitor that blocks the formation of polar Z ring septums. Rapidly oscillates between the poles of the cell to destabilize FtsZ filaments that have formed before they mature into polar Z rings. Prevents FtsZ polymerization. This chain is Probable septum site-determining protein MinC, found in Shewanella denitrificans (strain OS217 / ATCC BAA-1090 / DSM 15013).